We begin with the raw amino-acid sequence, 507 residues long: Aromatase (507 aa).

Cys436 lines the heme pocket.

Belongs to the cytochrome P450 family. Heme is required as a cofactor.

Its subcellular location is the membrane. It carries out the reaction testosterone + 3 reduced [NADPH--hemoprotein reductase] + 3 O2 = 17beta-estradiol + formate + 3 oxidized [NADPH--hemoprotein reductase] + 4 H2O + 4 H(+). The catalysed reaction is androst-4-ene-3,17-dione + 3 reduced [NADPH--hemoprotein reductase] + 3 O2 = estrone + formate + 3 oxidized [NADPH--hemoprotein reductase] + 4 H2O + 4 H(+). Its function is as follows. Catalyzes the formation of aromatic C18 estrogens from C19 androgens. The chain is Aromatase (CYP19A1) from Gallus gallus (Chicken).